Here is a 133-residue protein sequence, read N- to C-terminus: Binder of sperm protein homolog 1 (133 aa).

The signal sequence occupies residues 1–20; the sequence is MAQPLDFLLVSICLFHSLFS. 2 consecutive Fibronectin type-II domains span residues 40-84 and 85-133; these read TEDG…YCAL and SDYA…YCIE. Cystine bridges form between Cys45-Cys69, Cys59-Cys82, Cys90-Cys116, and Cys104-Cys131. Residue Asn72 is glycosylated (N-linked (GlcNAc...) asparagine).

It belongs to the seminal plasma protein family. Expressed only in the epididymis.

The protein resides in the secreted. Binds sperm in vitro and promotes sperm capacitation. Specifically promotes capacitation induced by high density lipoproteins (HDLs). Also binds heparin, phospholipid liposomes, and weakly to gelatin. Does not bind chondroitin sulfate B. The polypeptide is Binder of sperm protein homolog 1 (Bsph1) (Mus musculus (Mouse)).